The chain runs to 76 residues: Omega-conotoxin MoVIA (76 aa).

Positions 1–22 are cleaved as a signal peptide; sequence MKLTCVVIVAVLFLTACQLITA. Positions 23–45 are excised as a propeptide; sequence DDSRSTQRHRALRSTTKLSMSTR. Intrachain disulfides connect Cys-46–Cys-61, Cys-53–Cys-64, and Cys-60–Cys-71. Pro-49 and Pro-55 each carry hydroxyproline.

This sequence belongs to the conotoxin O1 superfamily. As to expression, expressed by the venom duct.

Its subcellular location is the secreted. Omega-conotoxins act at presynaptic membranes, they bind and block voltage-gated calcium channels (Cav). This toxin potently blocks mammalian N-type calcium channels (Cav2.2/CACNA1B) (IC(50)=330 nM on human channels). It is 9-fold more potent in displacing radiolabeled omega-conotoxin GVIA from fish brain membranes than from human SH-SY5Y cells. In terms of biological role, omega-conotoxins act at presynaptic membranes, they bind and block voltage-gated calcium channels (Cav). This toxin potently blocks mammalian N-type calcium channels (Cav2.2/CACNA1B) (IC(50)=600 nM on human channels). It is 60-fold more potent in displacing radiolabeled omega-conotoxin GVIA from fish brain membranes than from human SH-SY5Y cells. In vivo, when tested on rat neuropathic pain model, this toxin shows an analgesic activity. This Conus moncuri (Sea snail) protein is Omega-conotoxin MoVIA.